The primary structure comprises 555 residues: Tau-cadinol synthase (555 aa).

Residues R270, D307, D311, R448, and D451 each contribute to the (2E,6E)-farnesyl diphosphate site. Mg(2+) contacts are provided by D307 and D311. The short motif at 307-311 is the DDXXD motif element; it reads DDTYD. Mg(2+) is bound by residues D451, S455, and E459.

This sequence belongs to the terpene synthase family. It depends on Mg(2+) as a cofactor.

It carries out the reaction (2E,6E)-farnesyl diphosphate + H2O = tau-cadinol + diphosphate. The catalysed reaction is (2E,6E)-farnesyl diphosphate = (+)-gamma-cadinene + diphosphate. Its pathway is secondary metabolite biosynthesis; terpenoid biosynthesis. Functionally, sesquiterpene synthase that catalyzes the formation of sesquiterpenes and sesquiterpenoid alcohols. Converts farnesyl diphosphate (FPP) to tau-cadinol. Converts FPP to gamma-cadinene. Tau-cadinol is the major product. The sequence is that of Tau-cadinol synthase from Lavandula angustifolia (Lavender).